A 1142-amino-acid polypeptide reads, in one-letter code: Protein kinase C-like (1142 aa).

Residues 1–67 enclose the REM-1 1 domain; that stretch reads MNDEDKVHDI…LRELQMRRLG (67 aa). The segment at 70 to 139 is disordered; the sequence is VDNMSLGASP…PPDSNVPRAR (70 aa). The REM-1 2 domain occupies 149 to 226; it reads KFDTPHLGPR…LKRYEELHID (78 aa). Positions 231–349 constitute a C2 domain; it reads GPDDDSINLP…LRRKKIEAEM (119 aa). The disordered stretch occupies residues 357-403; that stretch reads ADRVGSRAPPPQFPMGAQSPQFAAPPTSPGSQEQNTMIPPQAPPPSQ. Polar residues predominate over residues 385 to 394; sequence PGSQEQNTMI. 2 Phorbol-ester/DAG-type zinc fingers span residues 457 to 505 and 525 to 576; these read GHKF…VTKC and PHRF…PDFC. Disordered stretches follow at residues 592-622 and 651-807; these read TQKK…SGSI and SQTT…TDPG. A compositionally biased stretch (polar residues) spans 613–622; sequence SKTSISSGSI. Composition is skewed to low complexity over residues 663 to 677, 712 to 724, and 741 to 765; these read TSTS…AAAA, SAQQ…SPQQ, and PQAR…MYQQ. Residues 817 to 1076 enclose the Protein kinase domain; sequence FNFLAVLGKG…AQEIMSQPFF (260 aa). Residues 823-831 and K846 contribute to the ATP site; that span reads LGKGNFGKV. D942 acts as the Proton acceptor in catalysis. Positions 1077 to 1142 constitute an AGC-kinase C-terminal domain; it reads RNINWDDIYH…RGFSYTADFE (66 aa).

It belongs to the protein kinase superfamily. AGC Ser/Thr protein kinase family. PKC subfamily.

The enzyme catalyses L-seryl-[protein] + ATP = O-phospho-L-seryl-[protein] + ADP + H(+). It carries out the reaction L-threonyl-[protein] + ATP = O-phospho-L-threonyl-[protein] + ADP + H(+). In Neurospora crassa (strain ATCC 24698 / 74-OR23-1A / CBS 708.71 / DSM 1257 / FGSC 987), this protein is Protein kinase C-like.